We begin with the raw amino-acid sequence, 408 residues long: Argininosuccinate synthase (408 aa).

ATP-binding positions include 11-19 (AYSGGLDTS) and A38. Positions 91 and 96 each coordinate L-citrulline. Residue G121 coordinates ATP. Residues T123, N127, and D128 each contribute to the L-aspartate site. Position 127 (N127) interacts with L-citrulline. The L-citrulline site is built by R131, S182, S191, E267, and Y279.

The protein belongs to the argininosuccinate synthase family. Type 1 subfamily. Homotetramer.

The protein localises to the cytoplasm. It catalyses the reaction L-citrulline + L-aspartate + ATP = 2-(N(omega)-L-arginino)succinate + AMP + diphosphate + H(+). It functions in the pathway amino-acid biosynthesis; L-arginine biosynthesis; L-arginine from L-ornithine and carbamoyl phosphate: step 2/3. The chain is Argininosuccinate synthase from Paracoccus denitrificans (strain Pd 1222).